The following is a 314-amino-acid chain: Ribosomal RNA small subunit methyltransferase H (314 aa).

Residues 31–33, Asp-49, Phe-76, Asp-118, and Gln-125 contribute to the S-adenosyl-L-methionine site; that span reads GGY.

The protein belongs to the methyltransferase superfamily. RsmH family.

It localises to the cytoplasm. It catalyses the reaction cytidine(1402) in 16S rRNA + S-adenosyl-L-methionine = N(4)-methylcytidine(1402) in 16S rRNA + S-adenosyl-L-homocysteine + H(+). Specifically methylates the N4 position of cytidine in position 1402 (C1402) of 16S rRNA. The protein is Ribosomal RNA small subunit methyltransferase H of Wolbachia pipientis wMel.